Here is a 1548-residue protein sequence, read N- to C-terminus: Lysine-specific demethylase 5D (1548 aa).

Residues 14 to 55 form the JmjN domain; the sequence is CPVFEPSWAEFRDPLGYIAKIRPIAEKSGICKIRPPADWQPP. Positions 79–169 constitute an ARID domain; that stretch reads TRVKLNYLDQ…IIYPYEIFQS (91 aa). Residues lysine 205, lysine 229, lysine 244, and lysine 279 each participate in a glycyl lysine isopeptide (Lys-Gly) (interchain with G-Cter in SUMO2) cross-link. The tract at residues 208–229 is disordered; sequence CYSRRGKRLQPEPEPTEEDIEK. Residues serine 300 and serine 316 each carry the phosphoserine modification. A PHD-type 1 zinc finger spans residues 325–371; the sequence is VCRICSRGDEVDKFLLCDGCSDNYHIFCLLPPLSEVPKGVWRCPKCI. Tyrosine 439 is a 2-oxoglutarate binding site. Residues 467-633 enclose the JmjC domain; the sequence is EYAACGWNLN…VGRQCIEHYR (167 aa). Residues histidine 513 and glutamate 515 each contribute to the Fe cation site. 2-oxoglutarate-binding residues include serine 521, asparagine 523, and lysine 531. Fe cation is bound at residue histidine 601. The C5HC2 zinc-finger motif lies at 706–758; it reads CIKCKTTCFLSALACYDCPDSLVCLSHINDLCKCSRNRQYLRYRYTLDELPAM. Serine 889 and serine 893 each carry phosphoserine. Residue lysine 1123 forms a Glycyl lysine isopeptide (Lys-Gly) (interchain with G-Cter in SUMO2) linkage. Residues 1182 to 1243 form a PHD-type 2 zinc finger; it reads ICICGQVCAG…DTKFLCPLCM (62 aa). Phosphoserine is present on serine 1355. A disordered region spans residues 1438 to 1468; the sequence is KPENPGNWSEEQTPERRRQRRQKVVLSRKGE.

The protein belongs to the JARID1 histone demethylase family. In terms of assembly, interacts withPCGF6, MSH5, ZMYND8, AR. It depends on L-ascorbate as a cofactor. Fe(2+) serves as cofactor.

It localises to the nucleus. The catalysed reaction is N(6),N(6),N(6)-trimethyl-L-lysyl(4)-[histone H3] + 3 2-oxoglutarate + 3 O2 = L-lysyl(4)-[histone H3] + 3 formaldehyde + 3 succinate + 3 CO2. Histone demethylase that specifically demethylates 'Lys-4' of histone H3, thereby playing a central role in histone code. Does not demethylate histone H3 'Lys-9', H3 'Lys-27', H3 'Lys-36', H3 'Lys-79' or H4 'Lys-20'. Demethylates trimethylated and dimethylated but not monomethylated H3 'Lys-4'. May play a role in spermatogenesis. Involved in transcriptional repression of diverse metastasis-associated genes; in this function seems to cooperate with ZMYND8. Suppresses prostate cancer cell invasion. Regulates androgen receptor (AR) transcriptional activity by demethylating H3K4me3 active transcription marks. In Mus musculus (Mouse), this protein is Lysine-specific demethylase 5D (Kdm5d).